We begin with the raw amino-acid sequence, 597 residues long: Siderophore iron transporter 2 (597 aa).

The residue at position 46 (serine 46) is a Phosphoserine. Transmembrane regions (helical) follow at residues isoleucine 65–threonine 85, phenylalanine 97–valine 117, serine 131–serine 151, valine 159–isoleucine 179, isoleucine 190–alanine 210, tyrosine 225–leucine 245, leucine 281–serine 301, threonine 312–tyrosine 332, valine 357–leucine 377, leucine 390–methionine 410, leucine 419–isoleucine 439, leucine 448–isoleucine 468, leucine 485–tryptophan 505, and lysine 558–isoleucine 578.

The protein belongs to the major facilitator superfamily.

The protein resides in the membrane. In terms of biological role, involved in the transport of siderophore iron and so has a role in iron homeostasis. This Schizosaccharomyces pombe (strain 972 / ATCC 24843) (Fission yeast) protein is Siderophore iron transporter 2 (str2).